Here is a 202-residue protein sequence, read N- to C-terminus: MSVNFVDSCRLPTHLGEFEMYGFVEESGQEHIMLTYGEITPDKPLLIRLHSECLTGDSLFSMRCDCGYQLETALENIVDAGQGALLYLRQEGRGIGLINKIKAYHLQDDGADTVEANEQLGFAADLRRYTMCKPMLEHFRVNKVKLLTNNPKKVQALKDLGIEVVEQMPIQVGRNQYNHEYLNTKAERMGHMMTHGLLSDLG.

48 to 52 (RLHSE) contributes to the GTP binding site. 3 residues coordinate Zn(2+): Cys53, Cys64, and Cys66. Residues Gln69, 91–93 (EGR), and Thr113 contribute to the GTP site. Asp125 functions as the Proton acceptor in the catalytic mechanism. Arg127 serves as the catalytic Nucleophile. GTP-binding residues include Thr148 and Lys153.

It belongs to the GTP cyclohydrolase II family. Zn(2+) is required as a cofactor.

It carries out the reaction GTP + 4 H2O = 2,5-diamino-6-hydroxy-4-(5-phosphoribosylamino)-pyrimidine + formate + 2 phosphate + 3 H(+). The protein operates within cofactor biosynthesis; riboflavin biosynthesis; 5-amino-6-(D-ribitylamino)uracil from GTP: step 1/4. Functionally, catalyzes the conversion of GTP to 2,5-diamino-6-ribosylamino-4(3H)-pyrimidinone 5'-phosphate (DARP), formate and pyrophosphate. The protein is GTP cyclohydrolase-2 of Colwellia psychrerythraea (strain 34H / ATCC BAA-681) (Vibrio psychroerythus).